Reading from the N-terminus, the 153-residue chain is Aspartate carbamoyltransferase regulatory chain (153 aa).

Residues cysteine 109, cysteine 114, cysteine 138, and cysteine 141 each coordinate Zn(2+).

It belongs to the PyrI family. In terms of assembly, contains catalytic and regulatory chains. It depends on Zn(2+) as a cofactor.

Its function is as follows. Involved in allosteric regulation of aspartate carbamoyltransferase. This is Aspartate carbamoyltransferase regulatory chain from Enterobacter sp. (strain 638).